Reading from the N-terminus, the 232-residue chain is Dof zinc finger protein DOF4.3 (232 aa).

A Dof-type zinc finger spans residues 25–79; sequence RVCARCDSDNTKFCYYNNYSEFQPRYFCKNCRRYWTHGGALRNVPIGGSSRAKRT. Residues cysteine 27, cysteine 30, cysteine 52, and cysteine 55 each coordinate Zn(2+).

It localises to the nucleus. In terms of biological role, transcription factor that binds specifically to a 5'-AA[AG]G-3' consensus core sequence. The chain is Dof zinc finger protein DOF4.3 (DOF4.3) from Arabidopsis thaliana (Mouse-ear cress).